A 543-amino-acid chain; its full sequence is CTP synthase (543 aa).

The segment at 1–265 is amidoligase domain; it reads MARYIFITGG…DDEVLAAFGI (265 aa). Residue S13 participates in CTP binding. S13 contacts UTP. An ATP-binding site is contributed by 14–19; it reads SLGKGL. Y54 is an L-glutamine binding site. D71 lines the ATP pocket. Mg(2+)-binding residues include D71 and E139. Residues 146-148, 186-191, and K222 contribute to the CTP site; these read DIE and KTKPTQ. Residues 186–191 and K222 contribute to the UTP site; that span reads KTKPTQ. 238–240 contributes to the ATP binding site; that stretch reads RDV. One can recognise a Glutamine amidotransferase type-1 domain in the interval 291 to 542; sequence TIAIVGKYTG…IQAAVVQSRL (252 aa). G353 contacts L-glutamine. The active-site Nucleophile; for glutamine hydrolysis is C380. Residues 381–384, E404, and R470 each bind L-glutamine; that span reads FGMQ. Residues H515 and E517 contribute to the active site.

It belongs to the CTP synthase family. As to quaternary structure, homotetramer.

It carries out the reaction UTP + L-glutamine + ATP + H2O = CTP + L-glutamate + ADP + phosphate + 2 H(+). The enzyme catalyses L-glutamine + H2O = L-glutamate + NH4(+). The catalysed reaction is UTP + NH4(+) + ATP = CTP + ADP + phosphate + 2 H(+). The protein operates within pyrimidine metabolism; CTP biosynthesis via de novo pathway; CTP from UDP: step 2/2. Allosterically activated by GTP, when glutamine is the substrate; GTP has no effect on the reaction when ammonia is the substrate. The allosteric effector GTP functions by stabilizing the protein conformation that binds the tetrahedral intermediate(s) formed during glutamine hydrolysis. Inhibited by the product CTP, via allosteric rather than competitive inhibition. Functionally, catalyzes the ATP-dependent amination of UTP to CTP with either L-glutamine or ammonia as the source of nitrogen. Regulates intracellular CTP levels through interactions with the four ribonucleotide triphosphates. The protein is CTP synthase of Bradyrhizobium sp. (strain BTAi1 / ATCC BAA-1182).